Reading from the N-terminus, the 778-residue chain is Endonuclease MutS2 (778 aa).

Residue 328-335 participates in ATP binding; sequence GPNTGGKT. The Smr domain maps to 702–777; sequence LDLRGKRYEE…GSGATIVTFK (76 aa).

Belongs to the DNA mismatch repair MutS family. MutS2 subfamily. Homodimer. Binds to stalled ribosomes, contacting rRNA.

Its function is as follows. Endonuclease that is involved in the suppression of homologous recombination and thus may have a key role in the control of bacterial genetic diversity. In terms of biological role, acts as a ribosome collision sensor, splitting the ribosome into its 2 subunits. Detects stalled/collided 70S ribosomes which it binds and splits by an ATP-hydrolysis driven conformational change. Acts upstream of the ribosome quality control system (RQC), a ribosome-associated complex that mediates the extraction of incompletely synthesized nascent chains from stalled ribosomes and their subsequent degradation. Probably generates substrates for RQC. The protein is Endonuclease MutS2 of Streptococcus pneumoniae (strain JJA).